A 163-amino-acid polypeptide reads, in one-letter code: Sperm surface protein Sp17 (163 aa).

Disordered stretches follow at residues 57–115 (PAEW…EKEE) and 129–163 (VARE…THEK). Composition is skewed to basic and acidic residues over residues 62-98 (SKVE…KEEE) and 129-139 (VAREEVKKMKT). Positions 114-143 (EEVAAVKIQAAFRGHVAREEVKKMKTDSLQ) constitute an IQ domain. Residues 153-163 (DTGFTSRTHEK) show a composition bias toward polar residues.

As to quaternary structure, homodimer. May interact with ROPN1. Testis- and sperm-specific.

Its subcellular location is the membrane. Functionally, sperm surface zona pellucida binding protein. Helps to bind spermatozoa to the zona pellucida with high affinity. Might function in binding zona pellucida and carbohydrates. This is Sperm surface protein Sp17 (SPA17) from Papio hamadryas (Hamadryas baboon).